Consider the following 117-residue polypeptide: UPF0642 protein C32H8.05 (117 aa).

A disordered region spans residues 39–117 (DQVNDLTKSS…SNFSKFLKKK (79 aa)). Residues 93-106 (KWAKKHLKKGKRAK) show a composition bias toward basic residues. The segment covering 107-117 (NSNFSKFLKKK) has biased composition (low complexity).

It belongs to the UPF0642 family.

It is found in the nucleus. The protein resides in the nucleolus. This chain is UPF0642 protein C32H8.05, found in Schizosaccharomyces pombe (strain 972 / ATCC 24843) (Fission yeast).